A 92-amino-acid chain; its full sequence is uncharacterized protein (92 aa).

The N-terminal stretch at 1 to 29 (MAAQTDYKKQVVGILLSLAFVLFVFSFSE) is a signal peptide.

This is an uncharacterized protein from Bacillus subtilis (strain 168).